A 225-amino-acid chain; its full sequence is Protein-L-isoaspartate O-methyltransferase (225 aa).

Residue Ser75 is part of the active site.

It belongs to the methyltransferase superfamily. L-isoaspartyl/D-aspartyl protein methyltransferase family.

It localises to the cytoplasm. The enzyme catalyses [protein]-L-isoaspartate + S-adenosyl-L-methionine = [protein]-L-isoaspartate alpha-methyl ester + S-adenosyl-L-homocysteine. In terms of biological role, catalyzes the methyl esterification of L-isoaspartyl residues in peptides and proteins that result from spontaneous decomposition of normal L-aspartyl and L-asparaginyl residues. It plays a role in the repair and/or degradation of damaged proteins. The polypeptide is Protein-L-isoaspartate O-methyltransferase (Xylella fastidiosa (strain M23)).